A 118-amino-acid chain; its full sequence is Hydrogenase maturation factor HypA (118 aa).

Residue histidine 2 coordinates Ni(2+). Zn(2+) contacts are provided by cysteine 73, cysteine 76, cysteine 93, and cysteine 96.

This sequence belongs to the HypA/HybF family.

Its function is as follows. Involved in the maturation of [NiFe] hydrogenases. Required for nickel insertion into the metal center of the hydrogenase. In Lawsonia intracellularis (strain PHE/MN1-00), this protein is Hydrogenase maturation factor HypA.